Reading from the N-terminus, the 207-residue chain is Ribosomal RNA small subunit methyltransferase G (207 aa).

S-adenosyl-L-methionine is bound by residues G73, L78, 124-125 (VE), and R139.

This sequence belongs to the methyltransferase superfamily. RNA methyltransferase RsmG family.

It is found in the cytoplasm. The catalysed reaction is guanosine(527) in 16S rRNA + S-adenosyl-L-methionine = N(7)-methylguanosine(527) in 16S rRNA + S-adenosyl-L-homocysteine. In terms of biological role, specifically methylates the N7 position of guanine in position 527 of 16S rRNA. This chain is Ribosomal RNA small subunit methyltransferase G, found in Escherichia coli (strain SMS-3-5 / SECEC).